A 934-amino-acid chain; its full sequence is MTDYKSTLNLPQTSFAMKANLAQREPQTLKRWQKENLYQQIRQARAGREKFILHDGPPYANGEIHIGHAVNKILKDIIVKAKTLSGFDAPYIPGWDCHGLPIEHNVEKKVGKAGVKVDFATFRKKCREYAAKQVAGQKEGFVRLGVLADWDKPYLTMDYKTEADIVRALGKIVANGHLVRGFKPVYWSVVGGSALAEAEVEYQEKTSFSIDVKYAVKDEADFTQRVAELGGEGPVSVVIWTTTPWTLPSSQAVSLNADLEYVVVQQPGARLLVAEALLESVGKRAGIDTATIVGRCHGRDLENLVLQHPFYTREVPVILGDHVTTDAGTGCVHTAPDHGMEDFEVGSRYGIGTLNYVDENGLYRESVEIFAGDHVYKVDEKIIELLESRDALLHQEKFTHSYPHCWRTKTPLIFRATPQWFISMTKNGLLDTVKTAVDGVEWIPDWGEARMRSMLEASPDWCISRQRTWGVPIALFVHKETQDLHPDTPALVEKVAALIETDGMDAWFNLNPEEILGEDAANYSKVTDTLDVWFDSGVTHYSVIQQREELQYPADLYLEGSDQHRGWFQSSLKTAIAINGTAPYKQVLTHGFTVDANGKKMSKSIGNTVSPQKVMNELGADVLRLWVAATDFSGDMSVSDEILMRTADSYRRIRNTMRYFMSNLNGFDPAINSVAFDDMVALDRWAVDRAAKLQRDIVACYDSYQFHTIYQKIHNFCIVDMGGFYLDIIKDRVYTMQEDSRARRSAQTAQYLIVQALVRWIAPILSFTADEIWQALPGEKTGPVFVAEWLELPELSEDDALNNSYWQTAAKVKTAVNKVLESKRSSGVIGGSLGAEVTLYASDELHAKLNSLGEELRFVLLVSAVNLKKLDEAPEDADQVDVVGLKVAVTKSEAAKCARCWHQRDDVGSHSEHPELCGRCVSNVEGNGEVRHYA.

A 'HIGH' region motif is present at residues 58–68 (PYANGEIHIGH). Glutamate 559 lines the L-isoleucyl-5'-AMP pocket. The 'KMSKS' region signature appears at 600–604 (KMSKS). An ATP-binding site is contributed by lysine 603. Zn(2+)-binding residues include cysteine 897, cysteine 900, cysteine 917, and cysteine 920.

The protein belongs to the class-I aminoacyl-tRNA synthetase family. IleS type 1 subfamily. Monomer. The cofactor is Zn(2+).

Its subcellular location is the cytoplasm. It catalyses the reaction tRNA(Ile) + L-isoleucine + ATP = L-isoleucyl-tRNA(Ile) + AMP + diphosphate. Catalyzes the attachment of isoleucine to tRNA(Ile). As IleRS can inadvertently accommodate and process structurally similar amino acids such as valine, to avoid such errors it has two additional distinct tRNA(Ile)-dependent editing activities. One activity is designated as 'pretransfer' editing and involves the hydrolysis of activated Val-AMP. The other activity is designated 'posttransfer' editing and involves deacylation of mischarged Val-tRNA(Ile). This chain is Isoleucine--tRNA ligase, found in Teredinibacter turnerae (strain ATCC 39867 / T7901).